A 277-amino-acid polypeptide reads, in one-letter code: MSGPILVFDSGIGGLSVLAEIRKRLPAENYCYLFDNARLPYGDLSESELIRGCVELICQQVQQVEAKIVVVACNTASTLVLPVLRQRLTIPVVGVVPAIKPAALLSKRKHIGVLATPGTVSRDYTHGLISQFAEDCQVDLFGSSELVMLAEQKAAKLPVNNQQLAKILAPIKASKLDVLVLGCTHFPMIKEELSQYLGESVLLLDSGEAIANRVASLLEPAALSEALHSGTTLHGGANSGTKGIGVIHAAYTQAITAGLNITLQEYGISDSSLIVTK.

Residues 9 to 10 and 41 to 42 each bind substrate; these read DS and YG. The active-site Proton donor/acceptor is cysteine 73. Position 74–75 (74–75) interacts with substrate; the sequence is NT. Cysteine 183 serves as the catalytic Proton donor/acceptor. 184 to 185 is a substrate binding site; that stretch reads TH.

This sequence belongs to the aspartate/glutamate racemases family.

It carries out the reaction L-glutamate = D-glutamate. It participates in cell wall biogenesis; peptidoglycan biosynthesis. In terms of biological role, provides the (R)-glutamate required for cell wall biosynthesis. This Shewanella denitrificans (strain OS217 / ATCC BAA-1090 / DSM 15013) protein is Glutamate racemase.